Consider the following 326-residue polypeptide: Aquaporin-3 (326 aa).

2 consecutive transmembrane segments (helical) span residues 24–44 and 64–84; these read LAEFLGTFLLVLLLNGMIITA and LAFGGGLAVMVAVLVSGGISG. The short motif at 88–90 is the NPA 1 element; that stretch reads NPA. The chain crosses the membrane as a helical span at residues 107–127; it reads LVYIFMQYMGAFFAASILYAV. N-linked (GlcNAc...) asparagine glycosylation occurs at Asn-146. 2 helical membrane-spanning segments follow: residues 166 to 186 and 196 to 216; these read IFDAILGTGLLVMGIFAIIDP and IPLYVGFLISSLIFSFSYNAG. An NPA 2 motif is present at residues 220 to 222; sequence NPA. Residues 247 to 267 traverse the membrane as a helical segment; sequence LWWLVPVIGPHVGGLLGGVTY. N-linked (GlcNAc...) asparagine glycosylation is present at Asn-294.

Belongs to the MIP/aquaporin (TC 1.A.8) family.

The protein resides in the cell membrane. Functionally, aquaglyceroporin that may modulate the water content and osmolytes during anhydrobiosis. This chain is Aquaporin-3, found in Milnesium tardigradum (Water bear).